A 347-amino-acid chain; its full sequence is 3',5'-bisphosphate nucleotidase 2 (347 aa).

Asp46 functions as the Proton acceptor in the catalytic mechanism. Positions 71, 134, 136, and 137 each coordinate Mg(2+). Thr139 functions as the Proton acceptor in the catalytic mechanism. Adenosine 3',5'-bisphosphate is bound by residues Thr139, Ser255, Lys258, Arg272, and Asp284. Positions 255, 258, 272, and 284 each coordinate AMP. Asp284 lines the Mg(2+) pocket.

This sequence belongs to the inositol monophosphatase superfamily. Requires Mg(2+) as cofactor. Very low expression in roots, leaves, stems, flowers and siliques.

The enzyme catalyses adenosine 3',5'-bisphosphate + H2O = AMP + phosphate. The catalysed reaction is 3'-phosphoadenylyl sulfate + H2O = adenosine 5'-phosphosulfate + phosphate. It catalyses the reaction 1D-myo-inositol 1,4-bisphosphate + H2O = 1D-myo-inositol 4-phosphate + phosphate. It participates in signal transduction; phosphatidylinositol signaling pathway. With respect to regulation, inhibited by Li(+) (IC(50)=10 mM), Na(+) (IC(50)=200 mM) and Ca(2+) (IC(50)=0.03 mM). In terms of biological role, phosphatase that converts adenosine 3'-phosphate 5'-phosphosulfate (PAPS) to adenosine 5'-phosphosulfate (APS) and 3'-phosphoadenosine 5'-phosphate (3'-PAP) to AMP. May regulate the flux of sulfur in the sulfur-activation pathway by converting PAPS to APS. Prevents both the toxicity of PAP on RNA processing enzymes as well as the product inhibition by PAP of sulfate conjugation. Is also able to hydrolyze inositol 1,4-bisphosphate. This chain is 3',5'-bisphosphate nucleotidase 2, found in Arabidopsis thaliana (Mouse-ear cress).